Reading from the N-terminus, the 61-residue chain is Short neurotoxin 1 (61 aa).

Residues 1–16 (LECHNQQSSQPPTTKS) show a composition bias toward polar residues. Residues 1–20 (LECHNQQSSQPPTTKSCPGD) form a disordered region. 4 cysteine pairs are disulfide-bonded: cysteine 3-cysteine 23, cysteine 17-cysteine 40, cysteine 42-cysteine 53, and cysteine 54-cysteine 59.

The protein belongs to the three-finger toxin family. Short-chain subfamily. Type I alpha-neurotoxin sub-subfamily. As to expression, expressed by the venom gland.

It localises to the secreted. Functionally, binds to muscle nicotinic acetylcholine receptor (nAChR) and inhibit acetylcholine from binding to the receptor, thereby impairing neuromuscular transmission. This chain is Short neurotoxin 1, found in Hemachatus haemachatus (Rinkhals).